We begin with the raw amino-acid sequence, 582 residues long: Trans-activating transcriptional regulatory protein (582 aa).

A disordered region spans residues 101–131 (QPVVEQPSPSSAYHAESFEHSAGVNQPSATG).

The protein belongs to the nucleopolyhedrovirus IE-1 protein family. As to quaternary structure, homodimer. Interacts with helicase and LEF-3. Phosphorylated.

Its subcellular location is the host nucleus. Functionally, regulatory transcriptional protein, which trans-activates gene expression from early baculovirus promoters. Can also trans-activate its own promoter, suggesting an autoregulation during infection of host cells. Also promotes viral DNA genome replication via the N-terminal region. The polypeptide is Trans-activating transcriptional regulatory protein (IE1) (Autographa californica nuclear polyhedrosis virus (AcMNPV)).